We begin with the raw amino-acid sequence, 61 residues long: U-poneritoxin(01)-Om5b (61 aa).

The signal sequence occupies residues 1-23 (MKLSALSLAFAIILMMTIMYTKA). Positions 24–41 (DADASADAEADADAEAEA) are excised as a propeptide. Glutamine 59 is modified (glutamine amide).

This sequence belongs to the formicidae venom precursor-01 superfamily. Post-translationally, truncated sequences of this peptide have also been found in the venom. It is possible they have been cleaved in the venom. Expressed by the venom gland.

It localises to the secreted. In terms of biological role, acidic peptide with potent hemolytic activities. It also shows low antimicrobial activities against E.coli (MIC=50uM), as well as histamine-releasing activity (28.3% at 10 uM). Does not have activity against S.aureus, and S.cerevisiae. This chain is U-poneritoxin(01)-Om5b, found in Odontomachus monticola (Trap-jaw ant).